A 392-amino-acid chain; its full sequence is Chaperone protein DnaJ (392 aa).

The J domain occupies 2–67 (DYYTILGVAK…QKRESYDRYG (66 aa)). The CR-type zinc-finger motif lies at 149 to 227 (GVEKELLVSG…CRGQGRIKDK (79 aa)). Residues C162, C165, C179, C182, C201, C204, C215, and C218 each contribute to the Zn(2+) site. CXXCXGXG motif repeat units follow at residues 162-169 (CDACSGSG), 179-186 (CDRCKGSG), 201-208 (CPDCSGEG), and 215-222 (CSVCRGQG).

It belongs to the DnaJ family. In terms of assembly, homodimer. The cofactor is Zn(2+).

Its subcellular location is the cytoplasm. Participates actively in the response to hyperosmotic and heat shock by preventing the aggregation of stress-denatured proteins and by disaggregating proteins, also in an autonomous, DnaK-independent fashion. Unfolded proteins bind initially to DnaJ; upon interaction with the DnaJ-bound protein, DnaK hydrolyzes its bound ATP, resulting in the formation of a stable complex. GrpE releases ADP from DnaK; ATP binding to DnaK triggers the release of the substrate protein, thus completing the reaction cycle. Several rounds of ATP-dependent interactions between DnaJ, DnaK and GrpE are required for fully efficient folding. Also involved, together with DnaK and GrpE, in the DNA replication of plasmids through activation of initiation proteins. The chain is Chaperone protein DnaJ from Chlamydia trachomatis serovar L2 (strain ATCC VR-902B / DSM 19102 / 434/Bu).